The following is a 596-amino-acid chain: UDP-glucuronate:xylan alpha-glucuronosyltransferase 2 (596 aa).

Residues 17-37 (LIRFNLVLLGFSFLLYTAIFF) traverse the membrane as a helical; Signal-anchor for type II membrane protein segment. Mn(2+)-binding residues include Asp395 and Asp397. Residues 395–397 (DAD), 424–426 (NSG), 451–455 (NGGDQ), and 504–509 (HYLGWK) each bind substrate. His504 provides a ligand contact to Mn(2+).

It belongs to the glycosyltransferase 8 family. Glycogenin subfamily. Mn(2+) is required as a cofactor.

The protein localises to the golgi apparatus membrane. Functionally, glycosyltransferase required for the addition of both glucuronic acid and 4-O-methylglucuronic acid branches to xylan in stem cell walls. In association with GUX1, is responsible for almost all of the substitutions of the xylan backbone in stem glucuronoxylan. In Arabidopsis thaliana (Mouse-ear cress), this protein is UDP-glucuronate:xylan alpha-glucuronosyltransferase 2 (GUX2).